We begin with the raw amino-acid sequence, 408 residues long: 3-phosphoshikimate 1-carboxyvinyltransferase (408 aa).

3-phosphoshikimate contacts are provided by Lys20, Ser21, and Arg25. Lys20 is a phosphoenolpyruvate binding site. Arg111 serves as a coordination point for phosphoenolpyruvate. 3-phosphoshikimate-binding residues include Ser151, Ser152, Gln153, Ser178, Asp293, and Lys320. Gln153 serves as a coordination point for phosphoenolpyruvate. Asp293 functions as the Proton acceptor in the catalytic mechanism. 3 residues coordinate phosphoenolpyruvate: Arg324, Arg365, and Lys389.

Belongs to the EPSP synthase family. In terms of assembly, monomer.

The protein resides in the cytoplasm. The catalysed reaction is 3-phosphoshikimate + phosphoenolpyruvate = 5-O-(1-carboxyvinyl)-3-phosphoshikimate + phosphate. The protein operates within metabolic intermediate biosynthesis; chorismate biosynthesis. Functionally, catalyzes the transfer of the enolpyruvyl moiety of phosphoenolpyruvate (PEP) to the 5-hydroxyl of shikimate-3-phosphate (S3P) to produce enolpyruvyl shikimate-3-phosphate and inorganic phosphate. In Sulfurisphaera tokodaii (strain DSM 16993 / JCM 10545 / NBRC 100140 / 7) (Sulfolobus tokodaii), this protein is 3-phosphoshikimate 1-carboxyvinyltransferase.